Here is a 338-residue protein sequence, read N- to C-terminus: uncharacterized protein (338 aa).

This is an uncharacterized protein from Thermoproteus tenax (TTV1).